The sequence spans 486 residues: N-succinylglutamate 5-semialdehyde dehydrogenase (486 aa).

Gly220–Gly225 serves as a coordination point for NAD(+). Residues Glu243 and Cys277 contribute to the active site.

It belongs to the aldehyde dehydrogenase family. AstD subfamily.

It carries out the reaction N-succinyl-L-glutamate 5-semialdehyde + NAD(+) + H2O = N-succinyl-L-glutamate + NADH + 2 H(+). It functions in the pathway amino-acid degradation; L-arginine degradation via AST pathway; L-glutamate and succinate from L-arginine: step 4/5. In terms of biological role, catalyzes the NAD-dependent reduction of succinylglutamate semialdehyde into succinylglutamate. This chain is N-succinylglutamate 5-semialdehyde dehydrogenase, found in Shewanella frigidimarina (strain NCIMB 400).